The sequence spans 459 residues: FBD-associated F-box protein At1g61320 (459 aa).

The disordered stretch occupies residues 1 to 25 (MAPPTKRTRVEMAESSNKRMKPSET). The region spanning 21–69 (KPSETVPEDVLELMMSTYLPVQSLLTTRVLSKRFRETEVRSLDLDFSGI) is the F-box domain. One can recognise an FBD domain in the interval 396–428 (VKIIGYKGHWHELDIVEFFVKNAPSLKRLELQM).

The sequence is that of FBD-associated F-box protein At1g61320 from Arabidopsis thaliana (Mouse-ear cress).